Here is a 30-residue protein sequence, read N- to C-terminus: GWRDWLNKGKEWLKKKGPGMVKAALAAATQ.

This sequence belongs to the ponericin-G family. In terms of tissue distribution, expressed by the venom gland.

It is found in the secreted. Shows a broad spectrum of activity against both Gram-positive and Gram-negative bacteria. Also has antimicrobial activity against S.cerevisiae. Has insecticidal and non-hemolytic activity. In Neoponera inversa (Ant), this protein is U1-poneritoxin-Ni3a.